We begin with the raw amino-acid sequence, 280 residues long: 2-C-methyl-D-erythritol 4-phosphate cytidylyltransferase (280 aa).

It belongs to the IspD/TarI cytidylyltransferase family. IspD subfamily.

The enzyme catalyses 2-C-methyl-D-erythritol 4-phosphate + CTP + H(+) = 4-CDP-2-C-methyl-D-erythritol + diphosphate. The protein operates within isoprenoid biosynthesis; isopentenyl diphosphate biosynthesis via DXP pathway; isopentenyl diphosphate from 1-deoxy-D-xylulose 5-phosphate: step 2/6. Functionally, catalyzes the formation of 4-diphosphocytidyl-2-C-methyl-D-erythritol from CTP and 2-C-methyl-D-erythritol 4-phosphate (MEP). The polypeptide is 2-C-methyl-D-erythritol 4-phosphate cytidylyltransferase (Psychrobacter cryohalolentis (strain ATCC BAA-1226 / DSM 17306 / VKM B-2378 / K5)).